Consider the following 150-residue polypeptide: C-C motif chemokine 25 (150 aa).

The N-terminal stretch at 1 to 23 (MNLWLLACLVAGFLGAWAPAVHT) is a signal peptide. Cystine bridges form between Cys30/Cys58 and Cys31/Cys75.

This sequence belongs to the intercrine beta (chemokine CC) family. As to expression, specifically expressed by thymic dendritic cells. High levels in thymus and small intestine.

The protein localises to the secreted. Its function is as follows. Potentially involved in T-cell development. Recombinant protein shows chemotactic activity on thymocytes, macrophages, THP-1 cells, and dendritics cells but is inactive on peripheral blood lymphocytes and neutrophils. Binds to CCR9. Isoform 2 is an antagonist of isoform 1. Binds to atypical chemokine receptor ACKR4 and mediates the recruitment of beta-arrestin (ARRB1/2) to ACKR4. This is C-C motif chemokine 25 (CCL25) from Homo sapiens (Human).